The chain runs to 32 residues: Photosystem II reaction center protein Z (32 aa).

A helical membrane pass occupies residues 12–32 (IGSAAWAGLVLLVGTLNYLVI).

It belongs to the PsbZ family. As to quaternary structure, PSII is composed of 1 copy each of membrane proteins PsbA, PsbB, PsbC, PsbD, PsbE, PsbF, PsbH, PsbI, PsbJ, PsbK, PsbL, PsbM, PsbT, PsbY, PsbZ, Psb30/Ycf12, at least 3 peripheral proteins of the oxygen-evolving complex and a large number of cofactors. It forms dimeric complexes.

It is found in the plastid. The protein resides in the chloroplast thylakoid membrane. In terms of biological role, may control the interaction of photosystem II (PSII) cores with the light-harvesting antenna, regulates electron flow through the 2 photosystem reaction centers. PSII is a light-driven water plastoquinone oxidoreductase, using light energy to abstract electrons from H(2)O, generating a proton gradient subsequently used for ATP formation. The chain is Photosystem II reaction center protein Z from Euglena anabaena (Euglenaria anabaena).